We begin with the raw amino-acid sequence, 66 residues long: Large ribosomal subunit protein bL35 (66 aa).

Residues 1 to 26 (MPKMKTHRGSAKRFKKTGSGKLKRSH) are compositionally biased toward basic residues. Positions 1–45 (MPKMKTHRGSAKRFKKTGSGKLKRSHAYTSHLFANKSQKQKRKLR) are disordered.

The protein belongs to the bacterial ribosomal protein bL35 family.

In Bacillus velezensis (strain DSM 23117 / BGSC 10A6 / LMG 26770 / FZB42) (Bacillus amyloliquefaciens subsp. plantarum), this protein is Large ribosomal subunit protein bL35.